The primary structure comprises 258 residues: Aspartate/glutamate leucyltransferase (258 aa).

It belongs to the R-transferase family. Bpt subfamily.

Its subcellular location is the cytoplasm. The catalysed reaction is N-terminal L-glutamyl-[protein] + L-leucyl-tRNA(Leu) = N-terminal L-leucyl-L-glutamyl-[protein] + tRNA(Leu) + H(+). It catalyses the reaction N-terminal L-aspartyl-[protein] + L-leucyl-tRNA(Leu) = N-terminal L-leucyl-L-aspartyl-[protein] + tRNA(Leu) + H(+). In terms of biological role, functions in the N-end rule pathway of protein degradation where it conjugates Leu from its aminoacyl-tRNA to the N-termini of proteins containing an N-terminal aspartate or glutamate. The sequence is that of Aspartate/glutamate leucyltransferase from Rhizobium johnstonii (strain DSM 114642 / LMG 32736 / 3841) (Rhizobium leguminosarum bv. viciae).